The primary structure comprises 928 residues: RhoGEF domain-containing protein gxcH (928 aa).

Over residues 30–48 the composition is skewed to low complexity; that stretch reads SKSFDNNNNNNSNTNNIKN. Disordered stretches follow at residues 30–76, 90–201, and 318–410; these read SKSF…PPVP, ITNY…PPLG, and DNGV…NKDT. A compositionally biased stretch (polar residues) spans 93-103; sequence YIPTTPPSINI. Over residues 112 to 123 the composition is skewed to acidic residues; it reads DNYDDNYDDNYS. Polar residues-rich tracts occupy residues 129-141, 175-187, and 334-367; these read TSTTPPQFNSPEF, ETFNDQNNNEGLQ, and KSGTTLDSEPNLKSVSSSNRGSFVISKSSYNLRG. The span at 377–407 shows a compositional bias: low complexity; the sequence is NQTTNKNNSNNNNNNTTTNNNNNNNNNNNNN. Residues 484–671 form the DH domain; it reads IFNKVVKEII…GKIVSDINGK (188 aa). Residues 699 to 807 are PH-like; it reads FIGEGKVKKV…NKIEDQIVSE (109 aa). The disordered stretch occupies residues 835–928; sequence SDSQSDFVDH…NTEPENFSFY (94 aa). Residues 848 to 857 show a composition bias toward low complexity; that stretch reads QEQQEQQQQQ.

Its function is as follows. GTPase-activating protein. The polypeptide is RhoGEF domain-containing protein gxcH (gxcH) (Dictyostelium discoideum (Social amoeba)).